The primary structure comprises 194 residues: Peptidyl-tRNA hydrolase (194 aa).

Position 17 (Tyr17) interacts with tRNA. The Proton acceptor role is filled by His22. TRNA-binding residues include Tyr68, Asn70, and Asn115.

Belongs to the PTH family. Monomer.

It is found in the cytoplasm. The catalysed reaction is an N-acyl-L-alpha-aminoacyl-tRNA + H2O = an N-acyl-L-amino acid + a tRNA + H(+). In terms of biological role, hydrolyzes ribosome-free peptidyl-tRNAs (with 1 or more amino acids incorporated), which drop off the ribosome during protein synthesis, or as a result of ribosome stalling. Its function is as follows. Catalyzes the release of premature peptidyl moieties from peptidyl-tRNA molecules trapped in stalled 50S ribosomal subunits, and thus maintains levels of free tRNAs and 50S ribosomes. This chain is Peptidyl-tRNA hydrolase, found in Pseudoalteromonas atlantica (strain T6c / ATCC BAA-1087).